We begin with the raw amino-acid sequence, 261 residues long: MAAACRSVKGLVAVITGGASGLGLATAERLVGQGASAVLLDLPNSGGEAQAKKLGNNCVFAPADVTSEKDVQTALALAKGKFGRVDVAVNCAGIAVASKTYNLKKGQTHTLEDFQRVLDVNLMGTFNVIRLVAGEMGQNEPDQGGQRGVIINTASVAAFEGQVGQAAYSASKGGIVGMTLPIARDLAPIGIRVMTIAPGLFGTPLLTSLPEKVCNFLASQVPFPSRLGDPAEYAHLVQAIIENPFLNGEVIRLDGAIRMQP.

A2 bears the N-acetylalanine mark. NAD(+) contacts are provided by S20, L22, and D41. An N6-acetyllysine; alternate modification is found at K53. N6-succinyllysine; alternate is present on K53. Residues D64 and V65 each coordinate NAD(+). The residue at position 69 (K69) is an N6-acetyllysine. C91 provides a ligand contact to NAD(+). An N6-acetyllysine mark is found at K99 and K105. Substrate is bound at residue S155. NAD(+) contacts are provided by Y168, K172, F201, and T203. Y168 acts as the Proton acceptor in catalysis. The residue at position 212 (K212) is an N6-acetyllysine; alternate. K212 bears the N6-succinyllysine; alternate mark.

This sequence belongs to the short-chain dehydrogenases/reductases (SDR) family. In terms of assembly, homotetramer. Component of mitochondrial ribonuclease P, a complex composed of TRMT10C/MRPP1, HSD17B10/MRPP2 and PRORP/MRPP3. Interacts with TRMT10C/MRPP1; forming the MRPP1-MRPP2 subcomplex of the mitochondrial ribonuclease P complex. In terms of tissue distribution, ubiquitously expressed in normal tissues but is overexpressed in neurons affected in AD.

It localises to the mitochondrion. The protein localises to the mitochondrion matrix. Its subcellular location is the mitochondrion nucleoid. It carries out the reaction a (3S)-3-hydroxyacyl-CoA + NAD(+) = a 3-oxoacyl-CoA + NADH + H(+). The enzyme catalyses (2S,3S)-3-hydroxy-2-methylbutanoyl-CoA + NAD(+) = 2-methyl-3-oxobutanoyl-CoA + NADH + H(+). It catalyses the reaction testosterone + NAD(+) = androst-4-ene-3,17-dione + NADH + H(+). The catalysed reaction is 5alpha-androstane-3alpha,17beta-diol + NAD(+) = 17beta-hydroxy-5alpha-androstan-3-one + NADH + H(+). It carries out the reaction 17beta-estradiol + NAD(+) = estrone + NADH + H(+). The enzyme catalyses cholate + NAD(+) = 3alpha,12alpha-dihydroxy-7-oxo-5beta-cholanate + NADH + H(+). It catalyses the reaction (3S)-3-hydroxybutanoyl-CoA + NAD(+) = acetoacetyl-CoA + NADH + H(+). The catalysed reaction is (3S)-hydroxyoctanoyl-CoA + NAD(+) = 3-oxooctanoyl-CoA + NADH + H(+). It carries out the reaction (3S)-hydroxyhexadecanoyl-CoA + NAD(+) = 3-oxohexadecanoyl-CoA + NADH + H(+). The enzyme catalyses 17beta-hydroxy-5alpha-androstan-3-one + NAD(+) = 5alpha-androstan-3,17-dione + NADH + H(+). It catalyses the reaction 5alpha-pregnan-20beta-ol-3-one + NAD(+) = 5alpha-pregnane-3,20-dione + NADH + H(+). The catalysed reaction is 3alpha-hydroxy-5alpha-pregnan-20-one + NAD(+) = 5alpha-pregnane-3,20-dione + NADH + H(+). It carries out the reaction cortisone + NAD(+) = 17alpha-hydroxypregn-4-en-3,11,20-trione-21-al + NADH + H(+). The enzyme catalyses 11-dehydrocorticosterone + NAD(+) = pregn-4-ene-3,11,20,21-tetraone + NADH + H(+). It catalyses the reaction cortisol + NAD(+) = 11beta,17alpha-dihydroxypregn-4-ene-3,20,21-trione + NADH + H(+). The catalysed reaction is chenodeoxycholate + NAD(+) = 7-oxolithocholate + NADH + H(+). It carries out the reaction ursodeoxycholate + NAD(+) = 7-oxolithocholate + NADH + H(+). The enzyme catalyses 3beta,7beta-dihydroxy-5beta-cholan-24-oate + NAD(+) = 3beta-hydroxy-7-oxo-5beta-cholan-24-oate + NADH + H(+). It functions in the pathway amino-acid degradation; L-isoleucine degradation. The protein operates within lipid metabolism; fatty acid beta-oxidation. Its pathway is steroid metabolism. It participates in lipid metabolism; bile acid biosynthesis. Its activity is regulated as follows. The phospholipase C-like activity toward cardiolipin is inhibited by amyloid-beta peptide. In terms of biological role, mitochondrial dehydrogenase involved in pathways of fatty acid, branched-chain amino acid and steroid metabolism. Acts as (S)-3-hydroxyacyl-CoA dehydrogenase in mitochondrial fatty acid beta-oxidation, a major degradation pathway of fatty acids. Catalyzes the third step in the beta-oxidation cycle, namely the reversible conversion of (S)-3-hydroxyacyl-CoA to 3-ketoacyl-CoA. Preferentially accepts straight medium- and short-chain acyl-CoA substrates with highest efficiency for (3S)-hydroxybutanoyl-CoA. Acts as 3-hydroxy-2-methylbutyryl-CoA dehydrogenase in branched-chain amino acid catabolic pathway. Catalyzes the oxidation of 3-hydroxy-2-methylbutanoyl-CoA into 2-methyl-3-oxobutanoyl-CoA, a step in isoleucine degradation pathway. Has hydroxysteroid dehydrogenase activity toward steroid hormones and bile acids. Catalyzes the oxidation of 3alpha-, 17beta-, 20beta- and 21-hydroxysteroids and 7alpha- and 7beta-hydroxy bile acids. Oxidizes allopregnanolone/brexanolone at the 3alpha-hydroxyl group, which is known to be critical for the activation of gamma-aminobutyric acid receptors (GABAARs) chloride channel. Has phospholipase C-like activity toward cardiolipin and its oxidized species. Likely oxidizes the 2'-hydroxyl in the head group of cardiolipin to form a ketone intermediate that undergoes nucleophilic attack by water and fragments into diacylglycerol, dihydroxyacetone and orthophosphate. Has higher affinity for cardiolipin with oxidized fatty acids and may degrade these species during the oxidative stress response to protect cells from apoptosis. By interacting with intracellular amyloid-beta, it may contribute to the neuronal dysfunction associated with Alzheimer disease (AD). Essential for structural and functional integrity of mitochondria. Functionally, in addition to mitochondrial dehydrogenase activity, moonlights as a component of mitochondrial ribonuclease P, a complex that cleaves tRNA molecules in their 5'-ends. Together with TRMT10C/MRPP1, forms a subcomplex of the mitochondrial ribonuclease P, named MRPP1-MRPP2 subcomplex, which displays functions that are independent of the ribonuclease P activity. The MRPP1-MRPP2 subcomplex catalyzes the formation of N(1)-methylguanine and N(1)-methyladenine at position 9 (m1G9 and m1A9, respectively) in tRNAs; HSD17B10/MRPP2 acting as a non-catalytic subunit. The MRPP1-MRPP2 subcomplex also acts as a tRNA maturation platform: following 5'-end cleavage by the mitochondrial ribonuclease P complex, the MRPP1-MRPP2 subcomplex enhances the efficiency of 3'-processing catalyzed by ELAC2, retains the tRNA product after ELAC2 processing and presents the nascent tRNA to the mitochondrial CCA tRNA nucleotidyltransferase TRNT1 enzyme. Associates with mitochondrial DNA complexes at the nucleoids to initiate RNA processing and ribosome assembly. This chain is 3-hydroxyacyl-CoA dehydrogenase type-2 (HSD17B10), found in Homo sapiens (Human).